A 388-amino-acid polypeptide reads, in one-letter code: Aldolase vrtJ (388 aa).

At Lys-241 the chain carries N6-(pyridoxal phosphate)lysine.

Belongs to the threonine aldolase family. Pyridoxal 5'-phosphate serves as cofactor.

It functions in the pathway secondary metabolite biosynthesis; terpenoid biosynthesis. Aldolase; part of the gene cluster that mediates the biosynthesis of viridicatumtoxin, a tetracycline-like fungal meroterpenoid with a unique, fused spirobicyclic ring system. The first step of the pathway is the production of the malonamoyl-CoA starter unit for the polyketide synthase vrtA. The aldolase vrtJ may be involved in the synthesis of the malonamate substrate for malonamoyl-CoA synthetase vrtB. The polyketide synthase vrtA then may utilize the malonamoyl-CoA starter unit, followed by sequential condensation of eight malonyl-CoA units to form the polyketide backbone. The cyclization of the last ring could be mediated by the lactamase-like protein vrtG. The proposed post-PKS tailoring steps are a hydroxylation at C5 catalyzed the cytochrome P450 monooxygenase vrtE, a hydroxylation at C12a catalyzed by VrtH and/or VrtI, and an O-methylation by the O-methyltransferase vrtF. VrtC is then proposed to catalyze the transfer of a geranyl group synthesized by vrtD to the aromatic C ring of the tetracyclic polyketide intermediate of viridicatumtoxin to yield previridicatumtoxin. Finally, the cytochrome P450 monooxygenase vrtK catalyzes the spirocyclization of the geranyl moiety of previridicatumtoxin to afford viridicatumtoxin. In Penicillium aethiopicum, this protein is Aldolase vrtJ.